The chain runs to 1203 residues: MEQAPNMAEPRGPVDHGVQIRFITEPVSGAEMGTLRRGGRRPAKDARASTYGVAVRVQGIAGQPFVVLNSGEKGGDSFGVQIKGANDQEASGALGSDFELPENPYSQVKGFPAPSQSSTSDEEPGAYWNGKLLRSQSQASLAGPGPMDPSNRSTSMLELAPKVASPGSTIDTAPLSSVDSLINKFDSQLGGQSRGRTGRRTRMLPPEQRKRSKSLDSRLPRDTLEERERQSTNHWTPSTKYDNHVGSSKQPSQSQSPSPPSGFSRSRQTQDWVLQSFEEPRGRAQDPTMLQFKSTPDLLRDQQEAAPPGSVDHMKATIYGILREGSSESETSVRRKVSLVLEKMQPLVMISSGSTKAVAGQGELTRKVEELQRKLDEEVKRRQKLEPSRVGLERQLEEKTEECSRLQELLERRKGEAQQSNKELQNMKRLLDQGEGLRHGLEAQVMELQNKLKQVQGPEPAKEVLLKDLLETRELLEEVLEGKQRVEEQLRLRERELTALKGALKEEVASRDQEVEHVRQQYQRDTEQLRRSMQDATQDHAVLEAERQKMSALVRGLQRELEETSEETGHWQSMFQKNKEDLRATKQELLQLRMEKEEMEEELGEKIEVLQRELEQARASAGDTRQVEVLKKELLQTQEELKELQAERQSQEVAGRHRDRELEKQLAVLRVEADRGRELEEQNLQLQKTLQQLRQDCEEASKAKMVAEAEAAVLGQRRAAVETTLRETQEENDEFRRRILGLEQQLKETRGLVDGGEAVEARLRDKLQRLEAEKQQLEEALNASQEEEGSLAAAKRALEARLEEAQRGLARLGQEQQTLNRALEEEGKQREVLRRGKAELEEQKHLLDRTVDRLNKELEKIGEDSKQALQQLQAQLDDYKEKARREVADAQRQAKDWASEAEKTSGGLSRLQDEIQRLRQALQASQAERDTARLDKELLAQRLQGLEQEAENKKRSQDDRARQLKGLEEKVSRLEAELDEEKNTVELLTDRVNRGRDQVDQLRTELLQERSARQDLECDKISLERQNKDLKTRLASSEGFQKPSASLSQLESQNQLLQERLQAEEREKTVLQSTNRKLERKVKELSIQIEDERQHVNDQKDQLSLRVKALKRQVDEAEEEIERLDGLRKKAQRELEEQHEVNEQLQARIKSLEKDSWRKASRSAAESALKHEGLSSDEEFDSVYDPSSIASLLTESNLQTSSC.

The interval 7 to 357 is head; sequence MAEPRGPVDH…VMISSGSTKA (351 aa). The tract at residues 25–48 is disordered; it reads EPVSGAEMGTLRRGGRRPAKDARA. A ZIM motif is present at residues 48-62; the sequence is ASTYGVAVRVQGIAG. Residues 54–67 form an interaction with TJP1/ZO1 region; the sequence is AVRVQGIAGQPFVV. The disordered stretch occupies residues 89–268; the sequence is EASGALGSDF…PPSGFSRSRQ (180 aa). Ser-96, Ser-135, Ser-137, Ser-140, Ser-155, and Ser-165 each carry phosphoserine. The span at 166-191 shows a compositional bias: polar residues; it reads PGSTIDTAPLSSVDSLINKFDSQLGG. Positions 207-231 are enriched in basic and acidic residues; that stretch reads EQRKRSKSLDSRLPRDTLEERERQS. Ser-214, Ser-217, Ser-258, Ser-276, Ser-338, and Ser-351 each carry phosphoserine. Residues 246–267 show a composition bias toward low complexity; that stretch reads GSSKQPSQSQSPSPPSGFSRSR. The stretch at 358–1160 forms a coiled coil; that stretch reads VAGQGELTRK…SLEKDSWRKA (803 aa). The residue at position 579 (Lys-579) is an N6-acetyllysine. Basic and acidic residues predominate over residues 883–903; the sequence is ARREVADAQRQAKDWASEAEK. Disordered stretches follow at residues 883-908 and 1160-1181; these read ARRE…SGGL and ASRS…EEFD. A tail region spans residues 1161-1203; it reads SRSAAESALKHEGLSSDEEFDSVYDPSSIASLLTESNLQTSSC. 3 positions are modified to phosphoserine: Ser-1175, Ser-1176, and Ser-1182.

This sequence belongs to the cingulin family. As to quaternary structure, homodimer. Interacts with TJP1/ZO1 and SPEF1.

It localises to the cell junction. Its subcellular location is the tight junction. In terms of biological role, probably plays a role in the formation and regulation of the tight junction (TJ) paracellular permeability barrier. This chain is Cingulin, found in Papio anubis (Olive baboon).